The chain runs to 136 residues: Nucleoside diphosphate kinase (136 aa).

ATP is bound by residues lysine 10, phenylalanine 58, arginine 86, threonine 92, arginine 104, and asparagine 114. Catalysis depends on histidine 117, which acts as the Pros-phosphohistidine intermediate.

This sequence belongs to the NDK family. Homotetramer. The cofactor is Mg(2+).

The protein resides in the cytoplasm. It carries out the reaction a 2'-deoxyribonucleoside 5'-diphosphate + ATP = a 2'-deoxyribonucleoside 5'-triphosphate + ADP. The catalysed reaction is a ribonucleoside 5'-diphosphate + ATP = a ribonucleoside 5'-triphosphate + ADP. Functionally, major role in the synthesis of nucleoside triphosphates other than ATP. The ATP gamma phosphate is transferred to the NDP beta phosphate via a ping-pong mechanism, using a phosphorylated active-site intermediate. The chain is Nucleoside diphosphate kinase from Saccharopolyspora erythraea (strain ATCC 11635 / DSM 40517 / JCM 4748 / NBRC 13426 / NCIMB 8594 / NRRL 2338).